Consider the following 513-residue polypeptide: Probable DNA ligase (513 aa).

Glu-213 is an ATP binding site. Lys-215 functions as the N6-AMP-lysine intermediate in the catalytic mechanism. Residues Arg-220, Arg-235, Glu-264, Phe-304, Arg-376, and Lys-382 each coordinate ATP.

It belongs to the ATP-dependent DNA ligase family. Mg(2+) serves as cofactor.

It catalyses the reaction ATP + (deoxyribonucleotide)n-3'-hydroxyl + 5'-phospho-(deoxyribonucleotide)m = (deoxyribonucleotide)n+m + AMP + diphosphate.. DNA ligase that seals nicks in double-stranded DNA during DNA replication, DNA recombination and DNA repair. This is Probable DNA ligase from Anaeromyxobacter dehalogenans (strain 2CP-C).